The chain runs to 90 residues: SAGA-associated factor 11 (90 aa).

Residues 63–84 form an SGF11-type zinc finger; it reads FSCDNCGRKIAGGRFAQHINKC.

It belongs to the SGF11 family. As to quaternary structure, component of the 1.8 MDa SAGA transcription coactivator-HAT complex. SAGA is built of 5 distinct domains with specialized functions. Within the SAGA complex, SUS1, SGF11, SGF73 and UBP8 form an additional subcomplex of SAGA called the DUB module (deubiquitination module). Interacts directly with SGF73, SUS1 and UBP8.

Its subcellular location is the nucleus. Functionally, functions as a component of the transcription regulatory histone acetylation (HAT) complex SAGA. At the promoters, SAGA is required for recruitment of the basal transcription machinery. It influences RNA polymerase II transcriptional activity through different activities such as TBP interaction and promoter selectivity, interaction with transcription activators, and chromatin modification through histone acetylation and deubiquitination. SAGA acetylates nucleosomal histone H3 to some extent (to form H3K9ac, H3K14ac, H3K18ac and H3K23ac). SAGA interacts with DNA via upstream activating sequences (UASs). Involved in transcriptional regulation of a subset of SAGA-regulated genes. Within the SAGA complex, participates in a subcomplex, that specifically deubiquitinates histones H2B. The polypeptide is SAGA-associated factor 11 (Lodderomyces elongisporus (strain ATCC 11503 / CBS 2605 / JCM 1781 / NBRC 1676 / NRRL YB-4239) (Yeast)).